The sequence spans 499 residues: MDKLQRDGKEDTSRQRRFLYLLLFQEDLYAIAYDHYFNRSSSFEPMENSSSNDRFSFLTVKRSISRIRQQNGSIIPFVNCDQNRLVGHSRSFYSELVLGGLTAVPEVPFSIRSKHSLEGMNEWTSFRSINSIFPLMEDKIPHSNFLLDIQIPHLTHPEILVRTFRRWIQDAPFLNLLRSVLHEHRNLTISSNLDQLILIASKENKRLSLFLWNYYAYECESLLVPLWKRFSHSRSLPYESFIERTPFYQKIKNIVIFYHKYIKKSLWFLKDPSIHYVKYRERSIIALRGTYLLVKKWRYHLTNFWQCHFHLWLQPYRIYIDEFSNNCFSLLGYLLSVKMKTSVVRIRMLDDSFITHLITKEFDPIAPTTLLIRSLAKERFCDISGHPISRLAWTGLTDDDILDRFDRIWRNIFHYHSGSSKKDGLYRMKYILRLPCAKTLACKHKSTIRVVRERFGSELFTKSFPKERESILLPFSKTRSQRERIWHSDIIQRNPLVNS.

Belongs to the intron maturase 2 family. MatK subfamily.

The protein localises to the plastid. It is found in the chloroplast. Functionally, usually encoded in the trnK tRNA gene intron. Probably assists in splicing its own and other chloroplast group II introns. This is Maturase K from Ceratozamia mexicana (Mexican horncone).